Here is a 408-residue protein sequence, read N- to C-terminus: Aminoacylase-1B (408 aa).

His-80 provides a ligand contact to Zn(2+). The active site involves Asp-82. Position 113 (Asp-113) interacts with Zn(2+). Glu-147 serves as the catalytic Proton acceptor. 3 residues coordinate Zn(2+): Glu-148, Glu-175, and His-373. Residue Ser-408 is modified to Phosphoserine.

This sequence belongs to the peptidase M20A family. As to quaternary structure, homodimer. It depends on Zn(2+) as a cofactor. Expressed in kidney.

The protein localises to the cytoplasm. The catalysed reaction is an N-acyl-L-amino acid + H2O = an L-alpha-amino acid + a carboxylate. The enzyme catalyses an N-acetyl-L-cysteine-S-conjugate + H2O = an S-substituted L-cysteine + acetate. Involved in the hydrolysis of N-acylated or N-acetylated amino acids (except L-aspartate). The protein is Aminoacylase-1B (Acy1b) of Rattus norvegicus (Rat).